We begin with the raw amino-acid sequence, 245 residues long: 1-(5-phosphoribosyl)-5-[(5-phosphoribosylamino)methylideneamino] imidazole-4-carboxamide isomerase (245 aa).

The Proton acceptor role is filled by aspartate 7. Catalysis depends on aspartate 129, which acts as the Proton donor.

The protein belongs to the HisA/HisF family.

The protein localises to the cytoplasm. It catalyses the reaction 1-(5-phospho-beta-D-ribosyl)-5-[(5-phospho-beta-D-ribosylamino)methylideneamino]imidazole-4-carboxamide = 5-[(5-phospho-1-deoxy-D-ribulos-1-ylimino)methylamino]-1-(5-phospho-beta-D-ribosyl)imidazole-4-carboxamide. The protein operates within amino-acid biosynthesis; L-histidine biosynthesis; L-histidine from 5-phospho-alpha-D-ribose 1-diphosphate: step 4/9. The protein is 1-(5-phosphoribosyl)-5-[(5-phosphoribosylamino)methylideneamino] imidazole-4-carboxamide isomerase of Shigella boydii serotype 18 (strain CDC 3083-94 / BS512).